The sequence spans 521 residues: ATP synthase subunit beta (521 aa).

2 stretches are compositionally biased toward low complexity: residues 1–21 (MAKAATPKTTAAAEAKPAAKA) and 28–42 (PKTTAAAKPAATKSG). Residues 1 to 42 (MAKAATPKTTAAAEAKPAAKAPAKKAAPKTTAAAKPAATKSG) form a disordered region. 199-206 (GGAGVGKT) contacts ATP.

This sequence belongs to the ATPase alpha/beta chains family. F-type ATPases have 2 components, CF(1) - the catalytic core - and CF(0) - the membrane proton channel. CF(1) has five subunits: alpha(3), beta(3), gamma(1), delta(1), epsilon(1). CF(0) has three main subunits: a(1), b(2) and c(9-12). The alpha and beta chains form an alternating ring which encloses part of the gamma chain. CF(1) is attached to CF(0) by a central stalk formed by the gamma and epsilon chains, while a peripheral stalk is formed by the delta and b chains.

The protein resides in the cell inner membrane. It carries out the reaction ATP + H2O + 4 H(+)(in) = ADP + phosphate + 5 H(+)(out). Produces ATP from ADP in the presence of a proton gradient across the membrane. The catalytic sites are hosted primarily by the beta subunits. In Brucella abortus (strain 2308), this protein is ATP synthase subunit beta.